The chain runs to 482 residues: Lipoamide acyltransferase component of branched-chain alpha-keto acid dehydrogenase complex, mitochondrial (482 aa).

A mitochondrion-targeting transit peptide spans 1-61 (MAAARVLRTW…HSLRTAAVLQ (61 aa)). The Lipoyl-binding domain occupies 64 to 139 (VVQFKLSDIG…YVGKPLIDIE (76 aa)). Residue Lys-105 is modified to N6-lipoyllysine. The residue at position 133 (Lys-133) is an N6-succinyllysine. The tract at residues 145 to 160 (DSEEDVVETPAVSHDE) is critical for association with PPM1K. In terms of domain architecture, Peripheral subunit-binding (PSBD) spans 172–209 (LATPAVRRLAMENNIKLSEVVGSGKDGRILKEDILSFL). Lys-196 bears the N6-acetyllysine; alternate mark. Lys-196 carries the post-translational modification N6-succinyllysine; alternate. Lys-202 is modified (N6-acetyllysine). The interval 217–252 (LPPSPKSEITPPPPQPKDRTFPTPIAKPPVFTGKDR) is disordered. Residues 218–231 (PPSPKSEITPPPPQ) are compositionally biased toward pro residues. Ser-220 bears the Phosphoserine mark. 2 positions are modified to N6-acetyllysine: Lys-243 and Lys-250. The residue at position 261 (Lys-261) is an N6-succinyllysine. At Lys-289 the chain carries N6-acetyllysine; alternate. N6-succinyllysine; alternate is present on Lys-289. Residue Arg-291 coordinates CoA. Lys-295 and Lys-304 each carry N6-acetyllysine. CoA is bound by residues Ser-306, Asp-349, Gln-378, Ser-399, Asn-400, Ser-403, Gly-424, and Ile-426. Lys-435 is subject to N6-acetyllysine. Lys-440 is modified (N6-acetyllysine; alternate). Lys-440 carries the post-translational modification N6-succinyllysine; alternate. Catalysis depends on residues His-452 and Asp-456.

The protein belongs to the 2-oxoacid dehydrogenase family. In terms of assembly, forms a 24-polypeptide structural core with octahedral symmetry that represents the E2 component of the branched-chain alpha-ketoacid dehydrogenase (BCKDH) complex. The BCKDH complex is composed of three major building blocks E1, E2 and E3. It is organized around E2, a 24-meric cubic core composed of DBT, to which are associated 6 to 12 copies of E1, and approximately 6 copies of the dehydrogenase E3, a DLD dimer. Interacts with PPM1K with a 24:1 stoichiometry; the N-terminal region (residues 49-61) of PPM1K and C-terminal linker of the lipoyl domain of DBT/E2 (residues 145-160) are critical for this interaction whereas the lipoyl prosthetic group is dispensable. This interaction requires colocalization in mitochondria. PPM1K competes with BCKDK for binding to DBT; this interaction is modulated by branched-chain alpha-keto acids (BCKAs). At steady state, BCKDH holoenzyme preferentially binds BCKDK and BCKDHA is phosphorylated. In response to high levels of BCKAs, BCKDK is replaced by PPM1K leading to BCKDHA dephosphorylation. The cofactor is (R)-lipoate.

The protein resides in the mitochondrion matrix. The enzyme catalyses N(6)-[(R)-dihydrolipoyl]-L-lysyl-[protein] + 2-methylpropanoyl-CoA = N(6)-[(R)-S(8)-2-methylpropanoyldihydrolipoyl]-L-lysyl-[protein] + CoA. In terms of biological role, the branched-chain alpha-keto dehydrogenase complex catalyzes the overall conversion of alpha-keto acids to acyl-CoA and CO(2). It contains multiple copies of three enzymatic components: branched-chain alpha-keto acid decarboxylase (E1), lipoamide acyltransferase (E2) and lipoamide dehydrogenase (E3). Within this complex, the catalytic function of this enzyme is to accept, and to transfer to coenzyme A, acyl groups that are generated by the branched-chain alpha-keto acid decarboxylase component. This chain is Lipoamide acyltransferase component of branched-chain alpha-keto acid dehydrogenase complex, mitochondrial (Dbt), found in Mus musculus (Mouse).